The primary structure comprises 429 residues: Fumarylacetoacetase (429 aa).

Residue D139 coordinates Ca(2+). H146 acts as the Proton acceptor in catalysis. R155 serves as a coordination point for substrate. Residues E212, E214, and D246 each coordinate Ca(2+). A Mg(2+)-binding site is contributed by D246. A substrate-binding site is contributed by Q253. K266 and T270 together coordinate Mg(2+). Residue T363 coordinates substrate.

This sequence belongs to the FAH family. Ca(2+) serves as cofactor. It depends on Mg(2+) as a cofactor.

It carries out the reaction 4-fumarylacetoacetate + H2O = acetoacetate + fumarate + H(+). The protein operates within amino-acid degradation; L-phenylalanine degradation; acetoacetate and fumarate from L-phenylalanine: step 6/6. Converts fumarylacetoacetate to acetoacetate and fumarate. Involved in tyrosine catabolic pathway. Catalyzes the final step in the tyrosine degradation pathway. In Oryza sativa subsp. japonica (Rice), this protein is Fumarylacetoacetase.